The primary structure comprises 90 residues: uncharacterized protein (90 aa).

Residues G25 to D90 form a disordered region. Composition is skewed to polar residues over residues N30–V54 and N65–N79.

This is an uncharacterized protein from Bacillus subtilis (strain 168).